Reading from the N-terminus, the 1100-residue chain is Beta-alanine-activating enzyme (1100 aa).

The interval H162–E181 is disordered. Residues T197 to K205, D427, R441, and K526 contribute to the ATP site. Residues E552–V632 enclose the Carrier domain. O-(pantetheine 4'-phosphoryl)serine is present on S591. The interval S643–S671 is disordered. S651 is subject to Phosphoserine.

It belongs to the ATP-dependent AMP-binding enzyme family.

Functionally, covalently binds beta-alanine in an ATP-dependent manner to form a thioester bond with its phosphopantetheine group and transfers it to an as yet unknown acceptor via an amide bond. May be required for a post-translational protein modification or for post-transcriptional modification of an RNA. This is Beta-alanine-activating enzyme (Aasdh) from Mus musculus (Mouse).